The chain runs to 196 residues: HTH-type transcriptional regulator UidR (196 aa).

Residues 10 to 70 (QPTRTRILNA…AIILQDQERA (61 aa)) enclose the HTH tetR-type domain. The H-T-H motif DNA-binding region spans 33–52 (SMKAICKSCAISPGTLYHHF).

Functionally, repressor for the uidRABC (gusRABC) operon. The chain is HTH-type transcriptional regulator UidR (uidR) from Escherichia coli O157:H7.